The sequence spans 83 residues: Probable calcium-binding protein CML29 (83 aa).

2 consecutive EF-hand domains span residues 5–40 (TEKA…LGSV) and 43–75 (DDVK…NRGL). Positions 18, 20, 22, 24, 29, 53, 55, 57, 59, and 64 each coordinate Ca(2+).

Potential calcium sensor. This chain is Probable calcium-binding protein CML29 (CML29), found in Arabidopsis thaliana (Mouse-ear cress).